An 85-amino-acid chain; its full sequence is Conotoxin MaIr94 (85 aa).

Residues 1 to 22 (MKLTCVLIITVLFLTACQLTAA) form the signal peptide. The propeptide occupies 23 to 49 (GNSRDKQEDPVVRSSGEVQRSEDIKLA). 3 disulfides stabilise this stretch: Cys-52–Cys-69, Cys-59–Cys-73, and Cys-68–Cys-84.

The protein belongs to the conotoxin O1 superfamily. In terms of tissue distribution, expressed by the venom duct.

The protein localises to the secreted. Its function is as follows. Produces no obvious effect on ionic currents when tested on the mouse dorsal rooted ganglia (DRG). The chain is Conotoxin MaIr94 from Conus marmoreus (Marble cone).